Reading from the N-terminus, the 161-residue chain is Cytochrome c-type biogenesis protein CcmE (161 aa).

Over 1 to 8 (MNPRRKKR) the chain is Cytoplasmic. A helical; Signal-anchor for type II membrane protein transmembrane segment spans residues 9–29 (LGLILALFVGISATVGLMLYA). Topologically, residues 30-161 (LNQNMDLFYT…TEQQKQGTGQ (132 aa)) are periplasmic. H129 and Y133 together coordinate heme. The disordered stretch occupies residues 142–161 (MKKTHEPLQYTEQQKQGTGQ). A compositionally biased stretch (polar residues) spans 151–161 (YTEQQKQGTGQ).

It belongs to the CcmE/CycJ family.

It localises to the cell inner membrane. Heme chaperone required for the biogenesis of c-type cytochromes. Transiently binds heme delivered by CcmC and transfers the heme to apo-cytochromes in a process facilitated by CcmF and CcmH. This chain is Cytochrome c-type biogenesis protein CcmE, found in Aliivibrio fischeri (strain MJ11) (Vibrio fischeri).